Reading from the N-terminus, the 585-residue chain is T-cell surface protein tactile (585 aa).

A signal peptide spans 1 to 21; sequence MEKKWKYCAVYYIIQIHFVKG. At 22–519 the chain is on the extracellular side; the sequence is VWEKTVNTEE…IVVNKPKDGM (498 aa). The 88-residue stretch at 38-125 folds into the Ig-like V-type 1 domain; sequence GSDVNLTCQT…YECMLVLYPE (88 aa). Residues N42, N97, N107, N148, N156, N166, N200, N215, N277, N278, N300, N350, and N368 are each glycosylated (N-linked (GlcNAc...) asparagine). A disulfide bridge links C45 with C118. Residues 156–238 enclose the Ig-like V-type 2 domain; it reads NQTLEIPCFQ…YRLHLSPVQI (83 aa). Cysteines 163 and 247 form a disulfide. Residues 269 to 375 form the Ig-like C2-type domain; the sequence is PEIPVIVENN…VWNISSEKIT (107 aa). An intrachain disulfide couples C290 to C355. 3 stretches are compositionally biased toward polar residues: residues 385-418, 426-452, and 460-475; these read TDPP…SSVT, RPNT…SSGT, and RIPS…GAGS. Residues 385–475 are disordered; sequence TDPPLSVTES…YSSSPSGAGS (91 aa). Residue N435 is glycosylated (N-linked (GlcNAc...) asparagine). N497 carries an N-linked (GlcNAc...) asparagine glycan. A helical membrane pass occupies residues 520–540; sequence SWPVIVAALLFCCMILFGLGV. Residues 541-585 lie on the Cytoplasmic side of the membrane; the sequence is RKWCQYQKEIMERPPPFKPPPPPIKYTCIQEPNESDLPYHEMETL.

In terms of assembly, homodimer; disulfide-linked. Interacts with PVR. In terms of tissue distribution, expressed on normal T-cell lines and clones, and some transformed T-cells, but no other cultured cell lines tested. It is expressed at very low levels on activated B-cells.

It is found in the membrane. May be involved in adhesive interactions of activated T and NK cells during the late phase of the immune response. Promotes NK cell-target adhesion by interacting with PVR present on target cells. May function at a time after T and NK cells have penetrated the endothelium using integrins and selectins, when they are actively engaging diseased cells and moving within areas of inflammation. In Homo sapiens (Human), this protein is T-cell surface protein tactile (CD96).